An 86-amino-acid polypeptide reads, in one-letter code: MKTLLLTLVVLTIACLDLGYTKTCFNDDLTNPKTTELCRHSMYFCFKNSWIAGGVERIERGCSLTCPDIKYNGKYIYCCTRDNCNA.

An N-terminal signal peptide occupies residues 1–21; that stretch reads MKTLLLTLVVLTIACLDLGYT. 4 disulfide bridges follow: Cys-24-Cys-45, Cys-38-Cys-62, Cys-66-Cys-78, and Cys-79-Cys-84.

The protein belongs to the three-finger toxin family. Short-chain subfamily. Orphan group IX sub-subfamily. Expressed by the venom gland.

Its subcellular location is the secreted. This is Neurotoxin-like protein pMD18-NTL1/2/4/5 from Bungarus multicinctus (Many-banded krait).